We begin with the raw amino-acid sequence, 105 residues long: Heat shock protein HspQ (105 aa).

Belongs to the HspQ family.

The protein localises to the cytoplasm. Involved in the degradation of certain denaturated proteins, including DnaA, during heat shock stress. In Baumannia cicadellinicola subsp. Homalodisca coagulata, this protein is Heat shock protein HspQ.